The primary structure comprises 288 residues: Formamidopyrimidine-DNA glycosylase (288 aa).

The active-site Schiff-base intermediate with DNA is the Pro2. Catalysis depends on Glu3, which acts as the Proton donor. The active-site Proton donor; for beta-elimination activity is Lys58. DNA is bound by residues His99, Arg118, and Lys161. The segment at 252–288 adopts an FPG-type zinc-finger fold; the sequence is RVYDREAEPCPREGCGGTIKRIVQAGRSTFFCAKCQR. Arg278 functions as the Proton donor; for delta-elimination activity in the catalytic mechanism.

This sequence belongs to the FPG family. Monomer. The cofactor is Zn(2+).

It carries out the reaction Hydrolysis of DNA containing ring-opened 7-methylguanine residues, releasing 2,6-diamino-4-hydroxy-5-(N-methyl)formamidopyrimidine.. The catalysed reaction is 2'-deoxyribonucleotide-(2'-deoxyribose 5'-phosphate)-2'-deoxyribonucleotide-DNA = a 3'-end 2'-deoxyribonucleotide-(2,3-dehydro-2,3-deoxyribose 5'-phosphate)-DNA + a 5'-end 5'-phospho-2'-deoxyribonucleoside-DNA + H(+). Involved in base excision repair of DNA damaged by oxidation or by mutagenic agents. Acts as a DNA glycosylase that recognizes and removes damaged bases. Has a preference for oxidized purines, such as 7,8-dihydro-8-oxoguanine (8-oxoG). Has AP (apurinic/apyrimidinic) lyase activity and introduces nicks in the DNA strand. Cleaves the DNA backbone by beta-delta elimination to generate a single-strand break at the site of the removed base with both 3'- and 5'-phosphates. This chain is Formamidopyrimidine-DNA glycosylase, found in Beijerinckia indica subsp. indica (strain ATCC 9039 / DSM 1715 / NCIMB 8712).